Reading from the N-terminus, the 138-residue chain is Small ribosomal subunit protein uS11c (138 aa).

The tract at residues 1–23 (MAKPIQRIGSRRNGPIGSRKNGR) is disordered.

The protein belongs to the universal ribosomal protein uS11 family. In terms of assembly, part of the 30S ribosomal subunit.

It localises to the plastid. The protein resides in the chloroplast. The polypeptide is Small ribosomal subunit protein uS11c (Platanus occidentalis (Sycamore)).